The sequence spans 447 residues: Glutamyl-tRNA(Gln) amidotransferase subunit A (447 aa).

Catalysis depends on charge relay system residues Lys-51 and Ser-126. Ser-150 functions as the Acyl-ester intermediate in the catalytic mechanism.

Belongs to the amidase family. GatA subfamily. In terms of assembly, heterotrimer of A, B and C subunits.

It catalyses the reaction L-glutamyl-tRNA(Gln) + L-glutamine + ATP + H2O = L-glutaminyl-tRNA(Gln) + L-glutamate + ADP + phosphate + H(+). Functionally, allows the formation of correctly charged Gln-tRNA(Gln) through the transamidation of misacylated Glu-tRNA(Gln) in organisms which lack glutaminyl-tRNA synthetase. The reaction takes place in the presence of glutamine and ATP through an activated gamma-phospho-Glu-tRNA(Gln). The sequence is that of Glutamyl-tRNA(Gln) amidotransferase subunit A from Helicobacter hepaticus (strain ATCC 51449 / 3B1).